A 324-amino-acid chain; its full sequence is Beta-ketoacyl-[acyl-carrier-protein] synthase III (324 aa).

Catalysis depends on residues Cys-114 and His-251. The segment at 252 to 256 (QANKR) is ACP-binding. Asn-281 is an active-site residue.

This sequence belongs to the thiolase-like superfamily. FabH family. As to quaternary structure, homodimer.

It is found in the cytoplasm. It catalyses the reaction malonyl-[ACP] + acetyl-CoA + H(+) = 3-oxobutanoyl-[ACP] + CO2 + CoA. The protein operates within lipid metabolism; fatty acid biosynthesis. Its function is as follows. Catalyzes the condensation reaction of fatty acid synthesis by the addition to an acyl acceptor of two carbons from malonyl-ACP. Catalyzes the first condensation reaction which initiates fatty acid synthesis and may therefore play a role in governing the total rate of fatty acid production. Possesses both acetoacetyl-ACP synthase and acetyl transacylase activities. Its substrate specificity determines the biosynthesis of branched-chain and/or straight-chain of fatty acids. This is Beta-ketoacyl-[acyl-carrier-protein] synthase III from Bradyrhizobium sp. (strain BTAi1 / ATCC BAA-1182).